Reading from the N-terminus, the 726-residue chain is Catalase-peroxidase (726 aa).

Residues 1–33 (MSTTDDTHNTLSAGKCPFHQGGHDRSAGAGTAS) form a disordered region. A cross-link (tryptophyl-tyrosyl-methioninium (Trp-Tyr) (with M-252)) is located at residues 105 to 226 (WHGAGTYRSI…LGATEMGLIY (122 aa)). His106 functions as the Proton acceptor in the catalytic mechanism. A cross-link (tryptophyl-tyrosyl-methioninium (Tyr-Met) (with W-105)) is located at residues 226–252 (YVNPEGPDHSGEPLSAAAAIRATFGNM). His267 lines the heme b pocket.

It belongs to the peroxidase family. Peroxidase/catalase subfamily. As to quaternary structure, homodimer or homotetramer. It depends on heme b as a cofactor. Formation of the three residue Trp-Tyr-Met cross-link is important for the catalase, but not the peroxidase activity of the enzyme.

The catalysed reaction is H2O2 + AH2 = A + 2 H2O. The enzyme catalyses 2 H2O2 = O2 + 2 H2O. In terms of biological role, bifunctional enzyme with both catalase and broad-spectrum peroxidase activity. The chain is Catalase-peroxidase from Salmonella arizonae (strain ATCC BAA-731 / CDC346-86 / RSK2980).